A 728-amino-acid polypeptide reads, in one-letter code: Catalase-peroxidase (728 aa).

Positions 91 to 218 form a cross-link, tryptophyl-tyrosyl-methioninium (Trp-Tyr) (with M-244); sequence WHSAGTYRTA…LAAVQMGLIY (128 aa). The active-site Proton acceptor is H92. The segment at residues 218–244 is a cross-link (tryptophyl-tyrosyl-methioninium (Tyr-Met) (with W-91)); that stretch reads YVNPEGPDGNPDPVAAARDIRDTFARM. Heme b is bound at residue H259.

The protein belongs to the peroxidase family. Peroxidase/catalase subfamily. Homodimer or homotetramer. Heme b is required as a cofactor. In terms of processing, formation of the three residue Trp-Tyr-Met cross-link is important for the catalase, but not the peroxidase activity of the enzyme.

The catalysed reaction is H2O2 + AH2 = A + 2 H2O. It catalyses the reaction 2 H2O2 = O2 + 2 H2O. Bifunctional enzyme with both catalase and broad-spectrum peroxidase activity. The sequence is that of Catalase-peroxidase from Burkholderia thailandensis (strain ATCC 700388 / DSM 13276 / CCUG 48851 / CIP 106301 / E264).